A 95-amino-acid chain; its full sequence is Nickel and cobalt resistance protein CnrY (95 aa).

Residues 1–45 are Cytoplasmic-facing; that stretch reads MADVEEWLTHARKVTQEASIGVDVTSIQECISAEPAQRVLVARRD. The chain crosses the membrane as a helical span at residues 46–68; it reads AWRAICCAAFAALVAFAAINRVA. Residues 69–95 are Periplasmic-facing; that stretch reads TIMLEKPAPTWVATPSAASPFGLLIGK.

The protein to A.xylosoxydans NccY.

It localises to the cell inner membrane. Nickel and cobalt resistance proteins CnrA, CnrB, CnrC CnrH and CnrR may be involved in the regulation of CNR. Functionally, cnrH alone is able to activate cnr expression, and both CnrY and CrnX are needed for nickel induction of CnrH. In the absence of wild-type CnrY (due either to a frameshift, PubMed:10671463 or absence of the transcript, PubMed:10671464), nickel and cobalt resistance is constitutive, indicating that CrnY may act as a repressor or an anti-sigma factor. This chain is Nickel and cobalt resistance protein CnrY (cnrY), found in Cupriavidus metallidurans (strain ATCC 43123 / DSM 2839 / NBRC 102507 / CH34) (Ralstonia metallidurans).